The following is a 529-amino-acid chain: Cytochrome P450 monooxygenase ausG (529 aa).

A helical membrane pass occupies residues 31–51 (FLVTCGLPWLLLLFSVTIILF). C470 serves as a coordination point for heme.

This sequence belongs to the cytochrome P450 family. It depends on heme as a cofactor.

It is found in the membrane. It functions in the pathway secondary metabolite biosynthesis; terpenoid biosynthesis. Functionally, cytochrome P450 monooxygenase; part of the gene cluster B that mediates the biosynthesis of austinol and dehydroaustinol, two fungal meroterpenoids. The first step of the pathway is the synthesis of 3,5-dimethylorsellinic acid by the polyketide synthase ausA. 3,5-dimethylorsellinic acid is then prenylated by the polyprenyl transferase ausN. Further epoxidation by the FAD-dependent monooxygenase ausM and cyclization by the probable terpene cyclase ausL lead to the formation of protoaustinoid A. Protoaustinoid A is then oxidized to spiro-lactone preaustinoid A3 by the combined action of the FAD-binding monooxygenases ausB and ausC, and the dioxygenase ausE. Acid-catalyzed keto-rearrangement and ring contraction of the tetraketide portion of preaustinoid A3 by ausJ lead to the formation of preaustinoid A4. The aldo-keto reductase ausK, with the help of ausH, is involved in the next step by transforming preaustinoid A4 into isoaustinone which is in turn hydroxylated by the P450 monooxygenase ausI to form austinolide. Finally, the cytochrome P450 monooxygenase ausG modifies austinolide to austinol. Austinol can be further modified to dehydroaustinol which forms a diffusible complex with diorcinol that initiates conidiation. Due to genetic rearrangements of the clusters and the subsequent loss of some enzymes, the end products of the Emericella nidulans austinoid biosynthesis clusters are austinol and dehydroaustinol, even if additional enzymes, such as the O-acetyltransferase ausQ and the cytochrome P450 monooxygenase ausR are still functional. In Emericella nidulans (strain FGSC A4 / ATCC 38163 / CBS 112.46 / NRRL 194 / M139) (Aspergillus nidulans), this protein is Cytochrome P450 monooxygenase ausG.